The primary structure comprises 156 residues: Small ribosomal subunit protein uS7 (156 aa).

It belongs to the universal ribosomal protein uS7 family. Part of the 30S ribosomal subunit. Contacts proteins S9 and S11.

In terms of biological role, one of the primary rRNA binding proteins, it binds directly to 16S rRNA where it nucleates assembly of the head domain of the 30S subunit. Is located at the subunit interface close to the decoding center, probably blocks exit of the E-site tRNA. The polypeptide is Small ribosomal subunit protein uS7 (Nitratidesulfovibrio vulgaris (strain ATCC 29579 / DSM 644 / CCUG 34227 / NCIMB 8303 / VKM B-1760 / Hildenborough) (Desulfovibrio vulgaris)).